Consider the following 586-residue polypeptide: Eukaryotic translation initiation factor 3 subunit D (586 aa).

Residues 102 to 176 (SAKRTFGRGG…DKPQRTREPS (75 aa)) form a disordered region. Positions 162–174 (GWKDYDKPQRTRE) are enriched in basic and acidic residues. Residues 301 to 315 (SLDLVTVNENAADAP) form an RNA gate region. Residues 567–586 (EEEEEVAAEEQEAAEEEAEE) are disordered.

The protein belongs to the eIF-3 subunit D family. As to quaternary structure, component of the eukaryotic translation initiation factor 3 (eIF-3) complex.

The protein resides in the cytoplasm. MRNA cap-binding component of the eukaryotic translation initiation factor 3 (eIF-3) complex, which is involved in protein synthesis of a specialized repertoire of mRNAs and, together with other initiation factors, stimulates binding of mRNA and methionyl-tRNAi to the 40S ribosome. The eIF-3 complex specifically targets and initiates translation of a subset of mRNAs involved in cell proliferation. In the eIF-3 complex, eif3d specifically recognizes and binds the 7-methylguanosine cap of a subset of mRNAs. The protein is Eukaryotic translation initiation factor 3 subunit D of Aspergillus niger (strain ATCC MYA-4892 / CBS 513.88 / FGSC A1513).